Here is a 1179-residue protein sequence, read N- to C-terminus: Dynein axonemal assembly factor 9 (1179 aa).

As to quaternary structure, interacts with ARL3.

Its function is as follows. May act as an effector for ARL3. This is Dynein axonemal assembly factor 9 from Mus musculus (Mouse).